A 102-amino-acid polypeptide reads, in one-letter code: Phosphoribosyl-ATP pyrophosphatase (102 aa).

The protein belongs to the PRA-PH family.

The protein localises to the cytoplasm. The enzyme catalyses 1-(5-phospho-beta-D-ribosyl)-ATP + H2O = 1-(5-phospho-beta-D-ribosyl)-5'-AMP + diphosphate + H(+). It participates in amino-acid biosynthesis; L-histidine biosynthesis; L-histidine from 5-phospho-alpha-D-ribose 1-diphosphate: step 2/9. This chain is Phosphoribosyl-ATP pyrophosphatase, found in Dinoroseobacter shibae (strain DSM 16493 / NCIMB 14021 / DFL 12).